The sequence spans 639 residues: MAEFDSKVPVSGMNNHVFEACHHVVKALRASDNNLDANLRKLLSDLEMHLSTFGIADTKVEDAGFSEIKKRFKEAVKRIRSWETNQSTMFEAGLSEADQFFQALYDVQTVLVGFKALPMKTNQMEKDVYNQATVALDIAMLRLEKELCDVLHQHKRHVQPDYLAVSSRRKDIVYDESFVSLDDEVIVEASSHEDDEQISDFYNSDLVDPIVLPHIKAIANAMFACEYDQPFCEAFIGVQREALEEYMVTLEMERFSCVDVLRMDWEDLNGAMRKWTKVVKIITQVYLASEKQLCDQILGDFESISTACFIEISKDAILSLLNFGEAVVLRSCKPEMLERFLSMYEVSAEILVDVDNLFPDETGSSLRIAFHNLSKKLADHTTTTFLKFKDAIASDESTRPFHGGGIHHLTRYVMNYLKLLPEYTDSLNSLLQNIHVDDSIPEKTGEDVLPSTFSPMARHLRSIVTTLESSLERKAQLYADEALKSIFLMNNFRYMVQKVKGSELRRLFGDEWIRKHIASYQCNVTNYERSTWSSILALLRDNNDSVRTLRERCRLFSLAFDDVYKNQTRWSVPDSELRDDLHISTSVKVVQSYRGFLGRNAVRIGEKHIRYTCEDIENMLLDLFECLPSPRSLRSSRKR.

The protein belongs to the EXO70 family. Component of the exocyst complex and of the exocyst-positive organelle (EXPO). Interacts with SEC6, SEC10A and SEC10B. Expressed in roots, in the root-hair zone, both in root hair and nonhair cells.

The protein resides in the secreted. Its subcellular location is the extracellular exosome. It localises to the cell membrane. It is found in the cytoplasm. The protein localises to the endomembrane system. Functionally, influences the subcellular localization patterns of other exocyst complex proteins (e.g. SEC5A, SEC15A, SEC15B and EXO84B) leading to their recruitment to exocyst, well-defined large punctate structures throughout the cytosol. Essential component for the formation and the recruitment of exocyst subunits to the exocyst-positive organelle (EXPO), a secreted double membrane structure also called extracellular exosome, that acts as a sequester for cytosolic proteins to release them into the apoplast. The sequence is that of Exocyst complex component EXO70E2 from Arabidopsis thaliana (Mouse-ear cress).